We begin with the raw amino-acid sequence, 730 residues long: Rap1 GTPase-activating protein 2 (730 aa).

A Phosphoserine; by PKG/PRKG1; in vitro modification is found at serine 7. Positions 32–53 are disordered; sequence ANSSDATLPDRPLSPPLTAPPT. The residue at position 45 (serine 45) is a Phosphoserine. At threonine 49 the chain carries Phosphothreonine. Positions 248 to 464 constitute a Rap-GAP domain; the sequence is IVSYDEHEVN…RTRAALLDNL (217 aa). Serine 507 is subject to Phosphoserine. Residues 509–533 are disordered; it reads ETMVGGQKKSHSGGIPGSLSGGISH. Phosphoserine occurs at positions 544, 558, 564, 612, and 613. The interval 552 to 730 is disordered; the sequence is VKNQSRSPIK…LSHASSGAGH (179 aa). Residues 585-613 show a composition bias toward polar residues; that stretch reads DSTSSTPKTPDGGHSSQEIKSETSSNPSS. Residues 618-631 are compositionally biased toward basic and acidic residues; the sequence is PNKEKPFMKLKENG. A compositionally biased stretch (low complexity) spans 635–647; the sequence is SRSSSSTSSVSST. Polar residues predominate over residues 661–670; sequence GSQPSTTSPF. Low complexity predominate over residues 678-687; sequence SPSPSSESPS. Residues 699–712 show a composition bias toward polar residues; sequence RSPTDAKSRNSPRS.

In terms of processing, in vitro phosphorylated by cGMP-dependent protein kinase 1 (cGKI) at Ser-7; the phosphorylation probably does not regulate GAP activity. Isoform 1 and isoform 2 are expressed in platelets with isoform 2 being the predominant form. Expressed in lymphocytes, heart, testis and pancreas.

The protein resides in the cytoplasm. It localises to the perinuclear region. In terms of biological role, GTPase activator for the nuclear Ras-related regulatory protein RAP-1A (KREV-1), converting it to the putatively inactive GDP-bound state. This Homo sapiens (Human) protein is Rap1 GTPase-activating protein 2 (RAP1GAP2).